A 56-amino-acid polypeptide reads, in one-letter code: GSICLEPKKVGRCRGSFPRFYFDSETGKCTPFIYGGCGGNGNNFETLHACRAICRA.

The 51-residue stretch at 4 to 54 (CLEPKKVGRCRGSFPRFYFDSETGKCTPFIYGGCGGNGNNFETLHACRAIC) folds into the BPTI/Kunitz inhibitor domain. 3 disulfides stabilise this stretch: Cys-4–Cys-54, Cys-13–Cys-37, and Cys-29–Cys-50.

This sequence belongs to the venom Kunitz-type family. Sea anemone type 2 potassium channel toxin subfamily.

It localises to the secreted. The protein localises to the nematocyst. Its function is as follows. This recombinant serine protease inhibitor inhibits trypsin (Ki=30 nM). It possesses anti-inflammatory activity in vitro. It blocks histamine influence on intracellular calcium concentration in murine bone marrow-derived macrophages (62.2% inhibition at 10 uM), which can indicate inhibition of H1-histamine receptor (HRH1). In contrast to some paralogs, this protein decreases reactive oxygen species (ROS) level in the oxidative stress agent 6-hydroxydopamine (6-OHDA)-induced neurotoxicity model, but does not show cytoprotective activity on neuroblastoma cells. In vivo, it shows analgesic activity, since it increases hot plate and tail flick withdrawal latencies, when using a mice thermal pain stimulation model. The protein is PI-stichotoxin-Hcr2n of Radianthus crispa (Leathery sea anemone).